The following is a 228-amino-acid chain: Leucyl/phenylalanyl-tRNA--protein transferase (228 aa).

The protein belongs to the L/F-transferase family.

It is found in the cytoplasm. The catalysed reaction is N-terminal L-lysyl-[protein] + L-leucyl-tRNA(Leu) = N-terminal L-leucyl-L-lysyl-[protein] + tRNA(Leu) + H(+). It carries out the reaction N-terminal L-arginyl-[protein] + L-leucyl-tRNA(Leu) = N-terminal L-leucyl-L-arginyl-[protein] + tRNA(Leu) + H(+). It catalyses the reaction L-phenylalanyl-tRNA(Phe) + an N-terminal L-alpha-aminoacyl-[protein] = an N-terminal L-phenylalanyl-L-alpha-aminoacyl-[protein] + tRNA(Phe). Functions in the N-end rule pathway of protein degradation where it conjugates Leu, Phe and, less efficiently, Met from aminoacyl-tRNAs to the N-termini of proteins containing an N-terminal arginine or lysine. This chain is Leucyl/phenylalanyl-tRNA--protein transferase, found in Sulfurimonas denitrificans (strain ATCC 33889 / DSM 1251) (Thiomicrospira denitrificans (strain ATCC 33889 / DSM 1251)).